The sequence spans 82 residues: Small ribosomal subunit protein bS16 (82 aa).

This sequence belongs to the bacterial ribosomal protein bS16 family.

The sequence is that of Small ribosomal subunit protein bS16 from Aeromonas hydrophila subsp. hydrophila (strain ATCC 7966 / DSM 30187 / BCRC 13018 / CCUG 14551 / JCM 1027 / KCTC 2358 / NCIMB 9240 / NCTC 8049).